Consider the following 72-residue polypeptide: Translational regulator CsrA (72 aa).

Belongs to the CsrA/RsmA family. Homodimer; the beta-strands of each monomer intercalate to form a hydrophobic core, while the alpha-helices form wings that extend away from the core.

It localises to the cytoplasm. In terms of biological role, a translational regulator that binds mRNA to regulate translation initiation and/or mRNA stability. Usually binds in the 5'-UTR at or near the Shine-Dalgarno sequence preventing ribosome-binding, thus repressing translation. Its main target seems to be the major flagellin gene, while its function is anatagonized by FliW. The polypeptide is Translational regulator CsrA (Agathobacter rectalis (strain ATCC 33656 / DSM 3377 / JCM 17463 / KCTC 5835 / VPI 0990) (Eubacterium rectale)).